A 93-amino-acid chain; its full sequence is Transcription factor PRE3 (93 aa).

In terms of domain architecture, bHLH spans 6 to 61 (SRSRQSSGTSRISEDQINDLIIKLQQLLPELRDSRRSDKVSAARVLQDTCNYIRNL).

As to quaternary structure, homodimer. Interacts with BHLH 147, BHLH148, BHLH149, BHLH150 and IBH1. Interacts with SIEL. In terms of tissue distribution, expressed in root and shoot meristems, and young siliques. Low levels detected in all aerial tissues.

It localises to the nucleus. The protein localises to the cytoplasm. Its function is as follows. Atypical and probable non DNA-binding bHLH transcription factor required for MONOPTEROS-dependent root initiation in embryo. Promotes the correct definition of the hypophysis cell division plane. Transcriptionally controlled by MONOPTEROS. Moves from its site of synthesis in pro-embryos cells into the hypophysis. Regulates brassinosteroid (BR) signaling by sequestering negative BR signaling components. May function as positive regulator of gibberellin signaling. May play a role in the regulation of light signaling and possibly auxin signaling. The polypeptide is Transcription factor PRE3 (PRE3) (Arabidopsis thaliana (Mouse-ear cress)).